A 238-amino-acid polypeptide reads, in one-letter code: Photosynthetic NDH subunit of lumenal location 1, chloroplastic (238 aa).

This sequence belongs to the PsbP family. In terms of assembly, part of the chloroplast NDH complex, composed of a mixture of chloroplast and nucleus encoded subunits. Component of the NDH lumenal subcomplex, at least composed of PnsL1, PnsL2, PnsL3, PnsL4 and PnsL5.

It is found in the plastid. It localises to the chloroplast thylakoid membrane. Its function is as follows. NDH shuttles electrons from NAD(P)H:plastoquinone, via FMN and iron-sulfur (Fe-S) centers, to quinones in the photosynthetic chain and possibly in a chloroplast respiratory chain. The immediate electron acceptor for the enzyme in this species is believed to be plastoquinone. Couples the redox reaction to proton translocation, and thus conserves the redox energy in a proton gradient. Required for accumulation of the chloroplast NAD(P)H dehydrogenase (NDH) complex. This is Photosynthetic NDH subunit of lumenal location 1, chloroplastic from Arabidopsis thaliana (Mouse-ear cress).